Reading from the N-terminus, the 327-residue chain is Malate dehydrogenase (327 aa).

11 to 17 lines the NAD(+) pocket; sequence GAAGQIA. 2 residues coordinate substrate: arginine 92 and arginine 98. NAD(+) is bound by residues asparagine 105, glutamine 112, and 129–131; that span reads VGN. 2 residues coordinate substrate: asparagine 131 and arginine 162. Residue histidine 187 is the Proton acceptor of the active site.

It belongs to the LDH/MDH superfamily. MDH type 2 family.

It carries out the reaction (S)-malate + NAD(+) = oxaloacetate + NADH + H(+). Its function is as follows. Catalyzes the reversible oxidation of malate to oxaloacetate. The polypeptide is Malate dehydrogenase (Nitrosospira multiformis (strain ATCC 25196 / NCIMB 11849 / C 71)).